We begin with the raw amino-acid sequence, 1477 residues long: Putative insulin-like peptide receptor (1477 aa).

The N-terminal stretch at 1–24 (MMRNVQSFYFLFLLIVLNFHVVLS) is a signal peptide. At 25 to 980 (AVCIGQRATT…LSVTKNNNQL (956 aa)) the chain is on the extracellular side. N-linked (GlcNAc...) asparagine glycosylation is found at Asn-55, Asn-255, Asn-300, Asn-325, Asn-457, Asn-491, Asn-549, Asn-644, Asn-732, Asn-791, Asn-874, Asn-895, and Asn-957. Fibronectin type-III domains follow at residues 652 to 750 (EPLG…IKAD) and 780 to 869 (NKSP…IVQA). The Fibronectin type-III 3 domain occupies 880–971 (LDSKMVRVQV…EEIHFKVAEL (92 aa)). The helical transmembrane segment at 981-1001 (IIGIISAVSAVIVALLVFILL) threads the bilayer. The Cytoplasmic portion of the chain corresponds to 1002–1477 (YMFLHRKLEK…EIFYGKPIPV (476 aa)). The 272-residue stretch at 1044 to 1315 (IELIRELGQG…LENEVDDDFV (272 aa)) folds into the Protein kinase domain. ATP-binding positions include 1050-1058 (LGQGSFGMV) and Lys-1077. Catalysis depends on Asp-1175, which acts as the Proton acceptor. Residue Tyr-1201 is modified to Phosphotyrosine; by autocatalysis. 2 disordered regions span residues 1350–1376 (YTKGDGNMQNMLSRSQNRKSAIEKSKE) and 1391–1421 (KYDANDTPEEIPKKKKRPRSKRNSAVDSNAC). Over residues 1356 to 1368 (NMQNMLSRSQNRK) the composition is skewed to polar residues. The span at 1403-1412 (KKKKRPRSKR) shows a compositional bias: basic residues.

This sequence belongs to the protein kinase superfamily. Tyr protein kinase family. Insulin receptor subfamily. Mn(2+) serves as cofactor. In terms of tissue distribution, expressed in dividing epithelial cells.

It is found in the membrane. The catalysed reaction is L-tyrosyl-[protein] + ATP = O-phospho-L-tyrosyl-[protein] + ADP + H(+). This receptor probably binds an insulin related protein and has a tyrosine-protein kinase activity. In Hydra vulgaris (Hydra), this protein is Putative insulin-like peptide receptor (HTK7).